A 202-amino-acid chain; its full sequence is Imidazoleglycerol-phosphate dehydratase (202 aa).

Belongs to the imidazoleglycerol-phosphate dehydratase family.

The protein localises to the cytoplasm. It catalyses the reaction D-erythro-1-(imidazol-4-yl)glycerol 3-phosphate = 3-(imidazol-4-yl)-2-oxopropyl phosphate + H2O. The protein operates within amino-acid biosynthesis; L-histidine biosynthesis; L-histidine from 5-phospho-alpha-D-ribose 1-diphosphate: step 6/9. The protein is Imidazoleglycerol-phosphate dehydratase of Brucella anthropi (strain ATCC 49188 / DSM 6882 / CCUG 24695 / JCM 21032 / LMG 3331 / NBRC 15819 / NCTC 12168 / Alc 37) (Ochrobactrum anthropi).